We begin with the raw amino-acid sequence, 102 residues long: Protein isd11 (102 aa).

This sequence belongs to the complex I LYR family.

It localises to the mitochondrion. Its function is as follows. Required for mitochondrial iron-sulfur (Fe-S) protein biosynthesis. The chain is Protein isd11 (isd11) from Schizosaccharomyces pombe (strain 972 / ATCC 24843) (Fission yeast).